Reading from the N-terminus, the 426-residue chain is 3-phosphoshikimate 1-carboxyvinyltransferase (426 aa).

Residues K22, S23, and R27 each contribute to the 3-phosphoshikimate site. K22 contributes to the phosphoenolpyruvate binding site. Residues G96 and R124 each coordinate phosphoenolpyruvate. S170, S171, Q172, S198, D314, N337, and K341 together coordinate 3-phosphoshikimate. Q172 provides a ligand contact to phosphoenolpyruvate. Residue D314 is the Proton acceptor of the active site. Residues R345, R387, and K412 each contribute to the phosphoenolpyruvate site.

The protein belongs to the EPSP synthase family. In terms of assembly, monomer.

The protein resides in the cytoplasm. It carries out the reaction 3-phosphoshikimate + phosphoenolpyruvate = 5-O-(1-carboxyvinyl)-3-phosphoshikimate + phosphate. It functions in the pathway metabolic intermediate biosynthesis; chorismate biosynthesis; chorismate from D-erythrose 4-phosphate and phosphoenolpyruvate: step 6/7. Functionally, catalyzes the transfer of the enolpyruvyl moiety of phosphoenolpyruvate (PEP) to the 5-hydroxyl of shikimate-3-phosphate (S3P) to produce enolpyruvyl shikimate-3-phosphate and inorganic phosphate. This is 3-phosphoshikimate 1-carboxyvinyltransferase from Shewanella halifaxensis (strain HAW-EB4).